The sequence spans 233 residues: MKNIMILSGAGLSAPSGLKTFRDNDGLWEEYDVMEVCSATGFRKNPKKVLDFYDARRVQLQNVKPNHAHEKIAQLKEKWGKNLFVITQNVDDLLERAGCKDVVHLHGFLPELRCLKCEGIFNIGYEKIIDKQCPKCKSKDLRHNIVMFEEQAPAYATLYSLLNQTSLFISIGTSGAVLPVGRYASMCEKSILNIYEKDANLERYFDKIYIEDIINAIDKIALDIENFMKDGNV.

The region spanning 1-230 is the Deacetylase sirtuin-type domain; it reads MKNIMILSGA…ALDIENFMKD (230 aa). 9–28 lines the NAD(+) pocket; sequence GAGLSAPSGLKTFRDNDGLW. The substrate site is built by Tyr-53 and Arg-56. Position 88–91 (88–91) interacts with NAD(+); that stretch reads QNVD. The Proton acceptor role is filled by His-106. Residues Cys-114, Cys-117, Cys-133, and Cys-136 each coordinate Zn(2+). NAD(+) contacts are provided by residues 172-174 and Ile-213; that span reads GTS.

Belongs to the sirtuin family. Class III subfamily. It depends on Zn(2+) as a cofactor.

The protein localises to the cytoplasm. It catalyses the reaction N(6)-acetyl-L-lysyl-[protein] + NAD(+) + H2O = 2''-O-acetyl-ADP-D-ribose + nicotinamide + L-lysyl-[protein]. It carries out the reaction N(6)-succinyl-L-lysyl-[protein] + NAD(+) + H2O = 2''-O-succinyl-ADP-D-ribose + nicotinamide + L-lysyl-[protein]. Functionally, NAD-dependent lysine deacetylase and desuccinylase that specifically removes acetyl and succinyl groups on target proteins. Modulates the activities of several proteins which are inactive in their acylated form. The chain is NAD-dependent protein deacylase from Campylobacter jejuni (strain RM1221).